A 627-amino-acid polypeptide reads, in one-letter code: Probable inactive receptor kinase At3g02880 (627 aa).

A signal peptide spans 1–23 (MKYKRKLSLSVVFLFVFYLAAVT). 5 LRR repeats span residues 91–112 (QLKT…DFSN), 115–137 (LLRY…LFTL), 139–161 (SIIR…VNSA), 163–184 (RLVT…ITLP), and 185–206 (LQQF…LSSW). Residues 222 to 246 (DTCEAESPNGGDAGGPNTPPEKKDS) are disordered. Residues 253 to 273 (AIVGIVIGCVVGLLLLLLILF) traverse the membrane as a helical segment. Positions 345-620 (KASAEVLGKG…LIEEVSHSSG (276 aa)) constitute a Protein kinase domain. At S347 the chain carries Phosphoserine. ATP contacts are provided by residues 351–359 (LGKGTVGSS) and K373. A helical transmembrane segment spans residues 389-409 (LHVLGSMSHANLVTLIAYYFS). Position 424 is a phosphoserine (S424). T444 is subject to Phosphothreonine. S519 is subject to Phosphoserine. Position 595 is a phosphothreonine (T595). Phosphoserine occurs at positions 621 and 626.

This sequence belongs to the protein kinase superfamily. Ser/Thr protein kinase family.

Its subcellular location is the membrane. This is Probable inactive receptor kinase At3g02880 from Arabidopsis thaliana (Mouse-ear cress).